The sequence spans 208 residues: Small ribosomal subunit protein uS4 (208 aa).

The 64-residue stretch at 98 to 161 folds into the S4 RNA-binding domain; sequence RRLDNTIYRL…RQSPIILEAQ (64 aa).

Belongs to the universal ribosomal protein uS4 family. Part of the 30S ribosomal subunit. Contacts protein S5. The interaction surface between S4 and S5 is involved in control of translational fidelity.

One of the primary rRNA binding proteins, it binds directly to 16S rRNA where it nucleates assembly of the body of the 30S subunit. Functionally, with S5 and S12 plays an important role in translational accuracy. The chain is Small ribosomal subunit protein uS4 from Solidesulfovibrio magneticus (strain ATCC 700980 / DSM 13731 / RS-1) (Desulfovibrio magneticus).